The following is a 337-amino-acid chain: MRAVLLPGSGEQPTAFCYQVNGSCPRTVHPLAIQVVIYLACAVGVLITVLGNLFVVFAVSYFKVLHTPTNFLLLSLALADMLLGLLVLPLSTVRSVESCWFFGDFLCRLHTYLDTLFCLTSIFHLCFISIDRHCAICDPLLYPSKFTVRTALRYIVAGWGIPAAYTAFFLYTDVVERALSQWLEEMPCVGSCQLLFNKFWGWLNFPAFFVPCLIMISLYLKIFVVATRQAQQIRTLSQSLAGAVKRERKAAKTLGIAVGIYLVCWLPFTVDTLVDSLLNFITPPLVFDIFIWFAYFNSACNPIIYVFSYRWFRKALKLLLSREIFSPRTPTVDLYHD.

Residues 1-38 (MRAVLLPGSGEQPTAFCYQVNGSCPRTVHPLAIQVVIY) lie on the Extracellular side of the membrane. N21 carries N-linked (GlcNAc...) asparagine glycosylation. 2 disulfides stabilise this stretch: C24–C188 and C99–C192. Residues 39–59 (LACAVGVLITVLGNLFVVFAV) traverse the membrane as a helical segment. Over 60–70 (SYFKVLHTPTN) the chain is Cytoplasmic. The helical transmembrane segment at 71–91 (FLLLSLALADMLLGLLVLPLS) threads the bilayer. Residues 92 to 109 (TVRSVESCWFFGDFLCRL) are Extracellular-facing. A helical membrane pass occupies residues 110-130 (HTYLDTLFCLTSIFHLCFISI). At 131-154 (DRHCAICDPLLYPSKFTVRTALRY) the chain is on the cytoplasmic side. Residues 155–175 (IVAGWGIPAAYTAFFLYTDVV) form a helical membrane-spanning segment. An extracellular Loop 2 (ECL2) region spans residues 176 to 189 (ERALSQWLEEMPCV). The Extracellular segment spans residues 176–204 (ERALSQWLEEMPCVGSCQLLFNKFWGWLN). The helical transmembrane segment at 205-225 (FPAFFVPCLIMISLYLKIFVV) threads the bilayer. The Cytoplasmic segment spans residues 226-253 (ATRQAQQIRTLSQSLAGAVKRERKAAKT). The helical transmembrane segment at 254–274 (LGIAVGIYLVCWLPFTVDTLV) threads the bilayer. Topologically, residues 275–284 (DSLLNFITPP) are extracellular. A helical transmembrane segment spans residues 285 to 307 (LVFDIFIWFAYFNSACNPIIYVF). Over 308-337 (SYRWFRKALKLLLSREIFSPRTPTVDLYHD) the chain is Cytoplasmic.

It belongs to the G-protein coupled receptor 1 family. In terms of tissue distribution, specifically expressed in neurons of the olfactory epithelium, to discrete glomeruli predominantly localized to a confined bulb region. Present in the dorsal area of the main olfactory epithelium. Also present in the limbic brain areas receiving projection from the olfactory system and involved in the regulation of emotions. Also expressed in some brain regions outside the olfactory epithelium, such as the hippocampus, cerebellum, cortex, raphe nuclei, hypothalamus, and habenula.

It localises to the cell membrane. Its activity is regulated as follows. Inhibited by 1-[(5,5- diphenyloxolan-2-yl)methyl]-4-(2-methoxyphenyl)piperazine and N-[(2,2-diphenyl-1,3-dioxolan-4-yl)methyl]-2-(2- methoxyphenoxy)ethan-1-amine small molecules. Its function is as follows. Olfactory receptor specific for trimethylamine, a trace amine enriched in the urine of male mice, playing a role in social behavior. Also activated by N-methylpiperidine. Trimethylamine is present at high concentration in the urine of male mice after puberty and acts as an attractant. Trimethylamine-binding causes a conformation change that triggers signaling via G(s)-class of G alpha proteins (GNAL or GNAS). Also required to provide olfactory input into limbic brain areas to regulate emotional behaviors likely via modulation of the serotonin system. The protein is Trace amine-associated receptor 5 of Mus musculus (Mouse).